The sequence spans 347 residues: Ribosomal RNA small subunit methyltransferase C (347 aa).

It belongs to the methyltransferase superfamily. RsmC family. As to quaternary structure, monomer.

It localises to the cytoplasm. The enzyme catalyses guanosine(1207) in 16S rRNA + S-adenosyl-L-methionine = N(2)-methylguanosine(1207) in 16S rRNA + S-adenosyl-L-homocysteine + H(+). Functionally, specifically methylates the guanine in position 1207 of 16S rRNA in the 30S particle. This Shewanella baltica (strain OS185) protein is Ribosomal RNA small subunit methyltransferase C.